The following is a 462-amino-acid chain: Myb-like transcriptional regulator mfmK (462 aa).

HTH myb-type domains lie at 1-54 (MARL…WWNS), 56-110 (ADGT…DPGI), and 113-162 (CDWT…LKHE). DNA-binding regions (H-T-H motif) lie at residues 32-52 (WRDL…RRWW), 83-106 (WSRV…SQVL), and 134-158 (WATI…STLR). The span at 159–175 (LKHENESKRESTIRKSV) shows a compositional bias: basic and acidic residues. Disordered regions lie at residues 159–184 (LKHE…NFEP), 216–262 (DEEE…VDNG), and 374–408 (STTT…RTSI). The segment covering 216–235 (DEEEDDDDDDEDNEEDDGDD) has biased composition (acidic residues). Composition is skewed to polar residues over residues 374–385 (STTTGMDSSSAP) and 396–408 (FGTS…RTSI).

Its subcellular location is the nucleus. Functionally, myb-like transcriptional regulator; part of the gene cluster that mediates the biosynthesis of the phthalide-terpenoid hybrid 11'-O-desmethylfendlerol. This chain is Myb-like transcriptional regulator mfmK, found in Annulohypoxylon moriforme (Filamentous fungus).